The primary structure comprises 244 residues: 23S rRNA (guanosine-2'-O-)-methyltransferase RlmB (244 aa).

G196, I216, and L225 together coordinate S-adenosyl-L-methionine.

This sequence belongs to the class IV-like SAM-binding methyltransferase superfamily. RNA methyltransferase TrmH family. RlmB subfamily. As to quaternary structure, homodimer.

The protein localises to the cytoplasm. It catalyses the reaction guanosine(2251) in 23S rRNA + S-adenosyl-L-methionine = 2'-O-methylguanosine(2251) in 23S rRNA + S-adenosyl-L-homocysteine + H(+). Its function is as follows. Specifically methylates the ribose of guanosine 2251 in 23S rRNA. The protein is 23S rRNA (guanosine-2'-O-)-methyltransferase RlmB of Photorhabdus laumondii subsp. laumondii (strain DSM 15139 / CIP 105565 / TT01) (Photorhabdus luminescens subsp. laumondii).